The chain runs to 169 residues: Phosphopantetheine adenylyltransferase (169 aa).

Ser-8 is a binding site for substrate. ATP contacts are provided by residues 8–9 (SF) and His-16. Residues Lys-40, Thr-72, and Arg-86 each contribute to the substrate site. ATP-binding positions include 87 to 89 (GLR), Glu-97, and 122 to 128 (YSFLSSS).

It belongs to the bacterial CoaD family. Homohexamer. Mg(2+) is required as a cofactor.

The protein localises to the cytoplasm. The enzyme catalyses (R)-4'-phosphopantetheine + ATP + H(+) = 3'-dephospho-CoA + diphosphate. It functions in the pathway cofactor biosynthesis; coenzyme A biosynthesis; CoA from (R)-pantothenate: step 4/5. Reversibly transfers an adenylyl group from ATP to 4'-phosphopantetheine, yielding dephospho-CoA (dPCoA) and pyrophosphate. The sequence is that of Phosphopantetheine adenylyltransferase from Cyanothece sp. (strain PCC 7425 / ATCC 29141).